The chain runs to 247 residues: DNA polymerase sliding clamp 1 (247 aa).

Belongs to the PCNA family. As to quaternary structure, homotrimer. The subunits circularize to form a toroid; DNA passes through its center. Replication factor C (RFC) is required to load the toroid on the DNA.

Functionally, sliding clamp subunit that acts as a moving platform for DNA processing. Responsible for tethering the catalytic subunit of DNA polymerase and other proteins to DNA during high-speed replication. The sequence is that of DNA polymerase sliding clamp 1 from Sulfolobus acidocaldarius (strain ATCC 33909 / DSM 639 / JCM 8929 / NBRC 15157 / NCIMB 11770).